The sequence spans 46 residues: Phospholipase A2 superbin c (46 aa).

Ca(2+) is bound by residues tyrosine 28, glycine 30, and glycine 32. Cysteine 29 and cysteine 45 are oxidised to a cystine.

It depends on Ca(2+) as a cofactor. Expressed by the venom gland.

The protein localises to the secreted. The enzyme catalyses a 1,2-diacyl-sn-glycero-3-phosphocholine + H2O = a 1-acyl-sn-glycero-3-phosphocholine + a fatty acid + H(+). Functionally, snake venom phospholipase A2 (PLA2) that inhibits collagen-induced platelet aggregation. In terms of inhibition of platelet aggregation, superbin c is more potent as superbin d. PLA2 catalyzes the calcium-dependent hydrolysis of the 2-acyl groups in 3-sn-phosphoglycerides. This is Phospholipase A2 superbin c from Austrelaps superbus (Lowland copperhead snake).